The primary structure comprises 261 residues: UPF0246 protein Rmet_0978 (261 aa).

This sequence belongs to the UPF0246 family.

This is UPF0246 protein Rmet_0978 from Cupriavidus metallidurans (strain ATCC 43123 / DSM 2839 / NBRC 102507 / CH34) (Ralstonia metallidurans).